The primary structure comprises 321 residues: Glycerol-3-phosphate dehydrogenase [NAD(P)+] (321 aa).

NADPH is bound by residues Ser-10, Trp-11, Arg-31, Arg-32, Tyr-47, and Lys-98. Residues Lys-98, Gly-125, and Ser-127 each coordinate sn-glycerol 3-phosphate. Ala-129 serves as a coordination point for NADPH. Sn-glycerol 3-phosphate-binding residues include Lys-177, Asp-230, Ser-240, Arg-241, and Asn-242. The active-site Proton acceptor is Lys-177. Arg-241 lines the NADPH pocket. Residues Val-265 and Glu-267 each contribute to the NADPH site.

The protein belongs to the NAD-dependent glycerol-3-phosphate dehydrogenase family.

It localises to the cytoplasm. It catalyses the reaction sn-glycerol 3-phosphate + NAD(+) = dihydroxyacetone phosphate + NADH + H(+). The enzyme catalyses sn-glycerol 3-phosphate + NADP(+) = dihydroxyacetone phosphate + NADPH + H(+). It participates in membrane lipid metabolism; glycerophospholipid metabolism. Its function is as follows. Catalyzes the reduction of the glycolytic intermediate dihydroxyacetone phosphate (DHAP) to sn-glycerol 3-phosphate (G3P), the key precursor for phospholipid synthesis. This chain is Glycerol-3-phosphate dehydrogenase [NAD(P)+], found in Thermotoga sp. (strain RQ2).